The sequence spans 165 residues: uncharacterized protein (165 aa).

A run of 5 helical transmembrane segments spans residues 30-50 (GWEL…AAGG), 65-85 (GMVW…VSGL), 86-106 (SAFW…VWQG), 108-128 (FWLL…FASG), and 131-151 (WTVT…SEYG).

The protein to E.coli YcdZ.

It localises to the cell membrane. This is an uncharacterized protein from Escherichia coli (strain K12).